The chain runs to 576 residues: Cyclic nucleotide-binding domain-containing protein 2 (576 aa).

A nucleoside 3',5'-cyclic phosphate is bound at residue 116 to 239 (SYRNYAEPLQ…DAQYRFEFFR (124 aa)).

Its subcellular location is the cytoplasm. It is found in the cytosol. Essential for male fertility. Plays an important role in spermatogenesis and regulates sperm motility by controlling the development of the flagellar bending of sperm. This Homo sapiens (Human) protein is Cyclic nucleotide-binding domain-containing protein 2 (CNBD2).